The sequence spans 302 residues: N-acetyl-D-glucosamine kinase (302 aa).

ATP contacts are provided by residues 4 to 11 (GFDVGGTK) and 133 to 140 (GFGGGLVY). Residues His-157, Cys-177, Cys-179, and Cys-184 each contribute to the Zn(2+) site.

It belongs to the ROK (NagC/XylR) family. NagK subfamily.

It catalyses the reaction N-acetyl-D-glucosamine + ATP = N-acetyl-D-glucosamine 6-phosphate + ADP + H(+). Its pathway is cell wall biogenesis; peptidoglycan recycling. Functionally, catalyzes the phosphorylation of N-acetyl-D-glucosamine (GlcNAc) derived from cell-wall degradation, yielding GlcNAc-6-P. This is N-acetyl-D-glucosamine kinase from Vibrio cholerae serotype O1 (strain ATCC 39315 / El Tor Inaba N16961).